The sequence spans 544 residues: Peptide chain release factor 3 (544 aa).

The tr-type G domain maps to 17–286; the sequence is EKRRNFAIIS…SFLDYGLAPR (270 aa). Residues 26 to 33, 94 to 98, and 148 to 151 each bind GTP; these read SHPDAGKT, DTPGH, and NKMD.

This sequence belongs to the TRAFAC class translation factor GTPase superfamily. Classic translation factor GTPase family. PrfC subfamily.

It localises to the cytoplasm. Its function is as follows. Increases the formation of ribosomal termination complexes and stimulates activities of RF-1 and RF-2. It binds guanine nucleotides and has strong preference for UGA stop codons. It may interact directly with the ribosome. The stimulation of RF-1 and RF-2 is significantly reduced by GTP and GDP, but not by GMP. The chain is Peptide chain release factor 3 from Microcystis aeruginosa (strain NIES-843 / IAM M-2473).